Consider the following 129-residue polypeptide: Large ribosomal subunit protein bL19c (129 aa).

This sequence belongs to the bacterial ribosomal protein bL19 family.

The protein resides in the plastid. In Prototheca wickerhamii, this protein is Large ribosomal subunit protein bL19c.